Consider the following 855-residue polypeptide: Glucans biosynthesis glucosyltransferase H (855 aa).

Transmembrane regions (helical) follow at residues 142–162, 196–216, 515–535, 572–592, 606–626, and 682–702; these read ILLT…KGIL, ILVL…TALM, VFLT…FLVL, LFST…ILIW, TLSM…RMIF, and FLWW…VSVI.

The protein belongs to the glycosyltransferase 2 family. OpgH subfamily.

It localises to the cell inner membrane. The protein operates within glycan metabolism; osmoregulated periplasmic glucan (OPG) biosynthesis. In terms of biological role, involved in the biosynthesis of osmoregulated periplasmic glucans (OPGs). This chain is Glucans biosynthesis glucosyltransferase H, found in Pseudomonas entomophila (strain L48).